The chain runs to 271 residues: MSSHADSNPWTVPALAQAKRAGRKLVMLTAYDASFARTFDANGVDLILVGDSLGMVMQGHDSTLAVTTADMVYHTAAVARALDRALLVADLSFQADATPERALDAATQLLQAGAEMVKIEGAGHKLEVIRYLVEREIPVCSHLGLTPQSVLRFGGYKVQGRGEAGEQLRRDAQAVVDAGASLVVLECVPTPIATQISAELSVPTIGIGAGPGCDGQVLVMHDMLGLDSGHRRPKFVKDFLAEGGSVAGAVRAYAQAVRDGSFPDAEHAYAA.

Mg(2+) contacts are provided by Asp-51 and Asp-90. 3-methyl-2-oxobutanoate-binding positions include 51-52, Asp-90, and Lys-118; that span reads DS. Glu-120 is a binding site for Mg(2+). Glu-186 (proton acceptor) is an active-site residue.

Belongs to the PanB family. As to quaternary structure, homodecamer; pentamer of dimers. Requires Mg(2+) as cofactor.

Its subcellular location is the cytoplasm. It carries out the reaction 3-methyl-2-oxobutanoate + (6R)-5,10-methylene-5,6,7,8-tetrahydrofolate + H2O = 2-dehydropantoate + (6S)-5,6,7,8-tetrahydrofolate. Its pathway is cofactor biosynthesis; (R)-pantothenate biosynthesis; (R)-pantoate from 3-methyl-2-oxobutanoate: step 1/2. Functionally, catalyzes the reversible reaction in which hydroxymethyl group from 5,10-methylenetetrahydrofolate is transferred onto alpha-ketoisovalerate to form ketopantoate. The polypeptide is 3-methyl-2-oxobutanoate hydroxymethyltransferase (Xanthomonas oryzae pv. oryzae (strain MAFF 311018)).